The sequence spans 116 residues: Somatostatin (116 aa).

A signal peptide spans 1–24; it reads MLSCRLQCALAALSIVLALGCVTG. Residues 25 to 88 constitute a propeptide that is removed on maturation; sequence APSDPRLRQF…QDEMRLELQR (64 aa). Residue Ala43 is modified to Alanine amide. The interval 62–82 is disordered; the sequence is QTENDALEPEDLSQAAEQDEM. A disulfide bridge connects residues Cys105 and Cys116.

Belongs to the somatostatin family. C-terminal amidation of the neuronostatin peptide is required for its biological activity, including for the regulation of mean arterial pressure.

The protein localises to the secreted. Inhibits the secretion of pituitary hormones, including that of growth hormone/somatotropin (GH1), PRL, ACTH, luteinizing hormone (LH) and TSH. Also impairs ghrelin- and GnRH-stimulated secretion of GH1 and LH; the inhibition of ghrelin-stimulated secretion of GH1 can be further increased by neuronostatin. Its function is as follows. May enhance low-glucose-induced glucagon release by pancreatic alpha cells. This effect may be mediated by binding to GPR107 and PKA activation. May regulate cardiac contractile function. May compromise cardiomyocyte viability. In the central nervous system, may impair memory retention and may affect hippocampal excitability. May also have anxiolytic and anorexigenic effects. May play a role in arterial pressure regulation. May inhibit basal, but not ghrelin- or GnRH-stimulated secretion of GH1 or LH, but does not affect the release of other pituitary hormones, including PRL, ACTH, FSH or TSH. Potentiates inhibitory action of somatostatin on ghrelin-stimulated secretion of GH1, but not that on GnRH-stimulated secretion of LH. The polypeptide is Somatostatin (SST) (Homo sapiens (Human)).